The primary structure comprises 194 residues: Peptidyl-tRNA hydrolase (194 aa).

Tyrosine 16 lines the tRNA pocket. The active-site Proton acceptor is histidine 21. TRNA is bound by residues phenylalanine 67, asparagine 69, and asparagine 115.

The protein belongs to the PTH family. In terms of assembly, monomer.

The protein resides in the cytoplasm. It carries out the reaction an N-acyl-L-alpha-aminoacyl-tRNA + H2O = an N-acyl-L-amino acid + a tRNA + H(+). Its function is as follows. Hydrolyzes ribosome-free peptidyl-tRNAs (with 1 or more amino acids incorporated), which drop off the ribosome during protein synthesis, or as a result of ribosome stalling. Catalyzes the release of premature peptidyl moieties from peptidyl-tRNA molecules trapped in stalled 50S ribosomal subunits, and thus maintains levels of free tRNAs and 50S ribosomes. The protein is Peptidyl-tRNA hydrolase of Sodalis glossinidius (strain morsitans).